An 83-amino-acid chain; its full sequence is Sec-independent protein translocase protein TatA (83 aa).

The chain crosses the membrane as a helical span at residues 1 to 21 (MGSFSIWHWLIVLLIVVMVFG). The interval 44-83 (KDGGQSAAATDDKPAAPAGQVTNAQASDKTTIDVEARQKS) is disordered. Positions 63–72 (QVTNAQASDK) are enriched in polar residues. A compositionally biased stretch (basic and acidic residues) spans 73–83 (TTIDVEARQKS).

The protein belongs to the TatA/E family. As to quaternary structure, the Tat system comprises two distinct complexes: a TatABC complex, containing multiple copies of TatA, TatB and TatC subunits, and a separate TatA complex, containing only TatA subunits. Substrates initially bind to the TatABC complex, which probably triggers association of the separate TatA complex to form the active translocon.

It is found in the cell inner membrane. Part of the twin-arginine translocation (Tat) system that transports large folded proteins containing a characteristic twin-arginine motif in their signal peptide across membranes. TatA could form the protein-conducting channel of the Tat system. The sequence is that of Sec-independent protein translocase protein TatA from Polaromonas sp. (strain JS666 / ATCC BAA-500).